An 878-amino-acid chain; its full sequence is Pyruvate, phosphate dikinase (878 aa).

The tract at residues 1–347 (MKKLIYYFGS…LYILQTRTAK (347 aa)) is N-terminal. Position 96 (arginine 96) interacts with ATP. The linker 1 stretch occupies residues 348 to 404 (RTAIAAINIAVQMVEEKLISKEQALMRIDPESLNQLLHTRIDYSKGLTSIAEGLPAS). Positions 405–502 (PGAATGIAVF…VIKQGDIITI (98 aa)) are central. Threonine 457 is modified (phosphothreonine; by PDRP1). Histidine 459 functions as the Tele-phosphohistidine intermediate in the catalytic mechanism. The linker 2 stretch occupies residues 503-537 (DGGSGKIFLGEMPLIQPTFSEESKLILDWADEISS). The tract at residues 538 to 878 (LKVRANAETV…AAAQAKIKHG (341 aa)) is C-terminal. 7 residues coordinate substrate: arginine 565, arginine 621, glutamate 749, glycine 770, threonine 771, asparagine 772, and aspartate 773. Glutamate 749 is a binding site for Mg(2+). Position 773 (aspartate 773) interacts with Mg(2+). The Proton donor role is filled by cysteine 835.

The protein belongs to the PEP-utilizing enzyme family. Homodimer. It depends on Mg(2+) as a cofactor. In terms of processing, phosphorylation of Thr-457 in the dark inactivates the enzyme. Dephosphorylation upon light stimulation reactivates the enzyme.

The enzyme catalyses pyruvate + phosphate + ATP = phosphoenolpyruvate + AMP + diphosphate + H(+). With respect to regulation, activated by light-induced dephosphorylation. Inhibited by dark-induced phosphorylation. Both reactions are catalyzed by PDRP1. Catalyzes the reversible phosphorylation of pyruvate and phosphate. In Rickettsia conorii (strain ATCC VR-613 / Malish 7), this protein is Pyruvate, phosphate dikinase (ppdK).